Reading from the N-terminus, the 449-residue chain is MSHDSSPQPLTAAPGAPLRGRLRPPGDKSISHRSMILGLLSQGETRVEGLLEGDDVLRTAAAAKALGAGVERLGPGRWRVQGVGIGGLGDPADVLDFGNAGTGSRLMMGVVGGQPVTATFDGDASLRSRPMRRILDPLTRMGTQVLSEAEGGRVPLTLRGPREAIPITYETPAASAQIKSAVLLAGLNAPGVTTVIEAAATRDHTERMLRLFGAAVSVEPHGPGGHGRKVALTGQPTLRGTDVVVPADPSSAAFPLVAALIVPGSDVVIEGVMMNPLRIGLITTLLEMGAQIERVAEREEGGETVADLRVRASRLNGVDVPAERAPAMIDEYPVLAVAASFAEGRTRMSGLHELRVKESDRLAAVAAGLAANGVRHTVEGDDLVVEGDGAAAPGGGTVETHLDHRIAMAFLVMGLAARNPVTVDDGAMIATSFPSFLPTMQALGGRIGA.

Residues 1–30 (MSHDSSPQPLTAAPGAPLRGRLRPPGDKSI) are disordered. Positions 28, 29, and 33 each coordinate 3-phosphoshikimate. Lys28 provides a ligand contact to phosphoenolpyruvate. Phosphoenolpyruvate contacts are provided by Gly101 and Arg129. Ser175, Gln177, Asp330, and Lys357 together coordinate 3-phosphoshikimate. Gln177 lines the phosphoenolpyruvate pocket. The active-site Proton acceptor is the Asp330. Residues Arg361 and Arg405 each contribute to the phosphoenolpyruvate site.

It belongs to the EPSP synthase family. In terms of assembly, monomer.

The protein resides in the cytoplasm. It catalyses the reaction 3-phosphoshikimate + phosphoenolpyruvate = 5-O-(1-carboxyvinyl)-3-phosphoshikimate + phosphate. It functions in the pathway metabolic intermediate biosynthesis; chorismate biosynthesis; chorismate from D-erythrose 4-phosphate and phosphoenolpyruvate: step 6/7. Its function is as follows. Catalyzes the transfer of the enolpyruvyl moiety of phosphoenolpyruvate (PEP) to the 5-hydroxyl of shikimate-3-phosphate (S3P) to produce enolpyruvyl shikimate-3-phosphate and inorganic phosphate. The protein is 3-phosphoshikimate 1-carboxyvinyltransferase of Methylobacterium radiotolerans (strain ATCC 27329 / DSM 1819 / JCM 2831 / NBRC 15690 / NCIMB 10815 / 0-1).